Consider the following 234-residue polypeptide: DEAD-box ATP-dependent RNA helicase 3 (234 aa).

The short motif at 120–148 is the Q motif element; that stretch reads LAVSRLGLPQKLVETLEKRGITKLFPIQR. The region spanning 151-234 is the Helicase ATP-binding domain; that stretch reads LVPALEGRDI…RTVCVYGGVS (84 aa). Position 164 to 171 (164 to 171) interacts with ATP; the sequence is AKTGTGKT.

Belongs to the DEAD box helicase family. DDX21/DDX50 subfamily.

The sequence is that of DEAD-box ATP-dependent RNA helicase 3 from Helianthus annuus (Common sunflower).